The following is a 304-amino-acid chain: MSHLLTMSELSEVEISEILKDAEDFANGKESKTTEQTFVANLFFENSTRTRFSFEVAEKRLGLDVLNFSADASSVQKGETLYDTIRTLESIGTKAVVIRHEQDRYFDELKDQVNIPILNAGDGCGNHPTQCLLDLLTIKQEFGRFEGLKIAIVGDVRHSRVARSNAEALTKLGATIYFASPEEWKDEDNTFGTYKPLDELVPEVDVMMLLRVQHERHDHYETDIMKEYHEKHGLTVEREQRMKEGSIIMHPAPVNRDVEIASELVECERSRIFKQMENGVYVRMAVLKRALPNVLGGMKHELLV.

Residues R49 and T50 each coordinate carbamoyl phosphate. Residue K77 coordinates L-aspartate. Carbamoyl phosphate is bound by residues R99, H127, and Q130. Positions 160 and 211 each coordinate L-aspartate. Residues A252 and P253 each contribute to the carbamoyl phosphate site.

Belongs to the aspartate/ornithine carbamoyltransferase superfamily. ATCase family. In terms of assembly, heterododecamer (2C3:3R2) of six catalytic PyrB chains organized as two trimers (C3), and six regulatory PyrI chains organized as three dimers (R2).

The enzyme catalyses carbamoyl phosphate + L-aspartate = N-carbamoyl-L-aspartate + phosphate + H(+). Its pathway is pyrimidine metabolism; UMP biosynthesis via de novo pathway; (S)-dihydroorotate from bicarbonate: step 2/3. Its function is as follows. Catalyzes the condensation of carbamoyl phosphate and aspartate to form carbamoyl aspartate and inorganic phosphate, the committed step in the de novo pyrimidine nucleotide biosynthesis pathway. The polypeptide is Aspartate carbamoyltransferase catalytic subunit (Bacillus cereus (strain ATCC 10987 / NRS 248)).